A 368-amino-acid chain; its full sequence is Cystathionine beta-lyase (368 aa).

Lysine 221 bears the N6-(pyridoxal phosphate)lysine mark.

Belongs to the class-II pyridoxal-phosphate-dependent aminotransferase family. MalY/PatB cystathionine beta-lyase subfamily. It depends on pyridoxal 5'-phosphate as a cofactor.

The catalysed reaction is L,L-cystathionine + H2O = L-homocysteine + pyruvate + NH4(+). The enzyme catalyses an S-substituted L-cysteine + H2O = a thiol + pyruvate + NH4(+). The protein operates within amino-acid biosynthesis; L-methionine biosynthesis via de novo pathway; L-homocysteine from L-cystathionine: step 1/1. Catalyzes the transformation of cystathionine to homocysteine. The sequence is that of Cystathionine beta-lyase (metC) from Corynebacterium glutamicum (Brevibacterium saccharolyticum).